Here is a 112-residue protein sequence, read N- to C-terminus: Large ribosomal subunit protein mL53 (112 aa).

The protein belongs to the mitochondrion-specific ribosomal protein mL53 family. Component of the mitochondrial ribosome large subunit (39S) which comprises a 16S rRNA and about 50 distinct proteins.

It is found in the mitochondrion. In Pongo abelii (Sumatran orangutan), this protein is Large ribosomal subunit protein mL53 (MRPL53).